Here is a 432-residue protein sequence, read N- to C-terminus: Muscle cell intermediate filament protein OV71 (432 aa).

The coil 1B stretch occupies residues 1 to 111; sequence KLIDELEEYK…RVHDQEISEL (111 aa). One can recognise an IF rod domain in the interval 1 to 277; the sequence is KLIDELEEYK…KMLEGEENRA (277 aa). The linker 12 stretch occupies residues 112–128; sequence QAMAARDTTSENREYFK. The interval 129–277 is coil 2; that stretch reads NELSSAIRDI…KMLEGEENRA (149 aa). Positions 278 to 432 are tail; the sequence is GLRQLVEQVV…HIQRSSHTIS (155 aa). The LTD domain maps to 310–427; it reads SRTSFQRSAK…EERASHIQRS (118 aa).

This sequence belongs to the intermediate filament family.

The polypeptide is Muscle cell intermediate filament protein OV71 (OV71) (Onchocerca volvulus).